We begin with the raw amino-acid sequence, 257 residues long: Zinc transporter ZupT (257 aa).

3 helical membrane-spanning segments follow: residues 5-25 (LILT…GVLG), 32-52 (LLAF…LMEM), and 61-81 (GMSP…YFGL). Fe(2+) contacts are provided by Asn120 and Glu123. Positions 123 and 148 each coordinate Zn(2+). Helical transmembrane passes span 137-157 (LGFG…LAVA), 171-191 (ILWA…AWLI), 195-215 (MISP…MVAL), and 236-256 (GVLC…TAGI). Residues Asn149, Glu152, and Glu181 each coordinate Fe(2+). Glu152 is a Zn(2+) binding site.

This sequence belongs to the ZIP transporter (TC 2.A.5) family. ZupT subfamily.

The protein resides in the cell inner membrane. The enzyme catalyses Zn(2+)(in) = Zn(2+)(out). Mediates zinc uptake. May also transport other divalent cations. This chain is Zinc transporter ZupT, found in Escherichia coli O127:H6 (strain E2348/69 / EPEC).